An 85-amino-acid polypeptide reads, in one-letter code: Small ribosomal subunit protein uS17 (85 aa).

This sequence belongs to the universal ribosomal protein uS17 family. As to quaternary structure, part of the 30S ribosomal subunit.

In terms of biological role, one of the primary rRNA binding proteins, it binds specifically to the 5'-end of 16S ribosomal RNA. In Mycoplasma pneumoniae (strain ATCC 29342 / M129 / Subtype 1) (Mycoplasmoides pneumoniae), this protein is Small ribosomal subunit protein uS17.